Here is a 138-residue protein sequence, read N- to C-terminus: Gap junction alpha-4 protein (138 aa).

The Cytoplasmic segment spans residues aspartate 1–serine 16. A helical transmembrane segment spans residues threonine 17–glycine 39. Residues glutamate 40 to proline 74 lie on the Extracellular side of the membrane. A helical membrane pass occupies residues tyrosine 75 to leucine 97. The Cytoplasmic portion of the chain corresponds to serine 98 to alanine 138.

It belongs to the connexin family. Alpha-type (group II) subfamily. A connexon is composed of a hexamer of connexins.

It is found in the cell membrane. The protein localises to the cell junction. The protein resides in the gap junction. One gap junction consists of a cluster of closely packed pairs of transmembrane channels, the connexons, through which materials of low MW diffuse from one cell to a neighboring cell. This Sus scrofa (Pig) protein is Gap junction alpha-4 protein (GJA4).